The following is a 339-amino-acid chain: Serpentine receptor class r-10 (339 aa).

Over 1 to 11 (MSGELWITLVD) the chain is Extracellular. A helical membrane pass occupies residues 12 to 32 (TADIVGVTLTFCVNIVLLGLL). The Cytoplasmic segment spans residues 33-42 (KTRGKNLGTY). Residues 43–63 (KYLMAFFSVFSIFYAIIEFIL) traverse the membrane as a helical segment. At 64 to 92 (RPIMHIENTTFFLISRKRFNYSTKLGKIN) the chain is on the extracellular side. N-linked (GlcNAc...) asparagine glycosylation is found at Asn71 and Asn83. A helical transmembrane segment spans residues 93-113 (SAFYCACFATSFVVSGVHFVY). Topologically, residues 114–131 (RYFATCKPNLLRLFNLPT) are cytoplasmic. A helical membrane pass occupies residues 132–152 (LLLWPLGCSVPVTMWASVSYF). Residues 153-201 (LYPDTEYTEAAVTNVLNNHYNWIKKENVSYIAYVYYQYENGVRHIYLKN) lie on the Extracellular side of the membrane. N-linked (GlcNAc...) asparagine glycosylation is present at Asn179. The helical transmembrane segment at 202 to 222 (LLGCFVHYFVMSMTFVVMFYC) threads the bilayer. Over 223–254 (GYATWKTMNEHKDVSDRTRALQKQLFKALVLQ) the chain is Cytoplasmic. The helical transmembrane segment at 255-275 (TLIPTIFMYAPTGVMFIAPFF) threads the bilayer. Over 276-284 (DVNLNANAN) the chain is Extracellular. Residues 285–305 (FIVFCSFLYPGLDPLILILII) form a helical membrane-spanning segment. At 306 to 339 (RDFRRTIFNFLCGKKNSVDESRSTTRANLSQVPT) the chain is on the cytoplasmic side.

This sequence belongs to the nematode receptor-like protein str family. In terms of assembly, interacts with odr-4. Strongly expressed in the sensory cilia of AWA olfactory neurons, and at low levels in the CEP neurons.

The protein localises to the cell projection. The protein resides in the cilium membrane. In terms of biological role, an odorant receptor which affects chemotaxis to the volatile odorant diacetyl. Specifies AWA neuronal cell fate via the odr-7 pathway. This Caenorhabditis elegans protein is Serpentine receptor class r-10.